A 189-amino-acid chain; its full sequence is GMP synthase [glutamine-hydrolyzing] subunit A (189 aa).

A Glutamine amidotransferase type-1 domain is found at 5-189 (KILVVNNYGQ…MNFFEVCDLY (185 aa)). Cysteine 79 serves as the catalytic Nucleophile. Residues histidine 166 and glutamate 168 contribute to the active site.

In terms of assembly, heterodimer composed of a glutamine amidotransferase subunit (A) and a GMP-binding subunit (B).

The catalysed reaction is XMP + L-glutamine + ATP + H2O = GMP + L-glutamate + AMP + diphosphate + 2 H(+). It participates in purine metabolism; GMP biosynthesis; GMP from XMP (L-Gln route): step 1/1. Catalyzes the synthesis of GMP from XMP. The sequence is that of GMP synthase [glutamine-hydrolyzing] subunit A from Methanosarcina mazei (strain ATCC BAA-159 / DSM 3647 / Goe1 / Go1 / JCM 11833 / OCM 88) (Methanosarcina frisia).